We begin with the raw amino-acid sequence, 613 residues long: UvrABC system protein C (613 aa).

The region spanning 29-107 is the GIY-YIG domain; that stretch reads DVAGVYKMLG…IKTLKPKYNI (79 aa). The UVR domain occupies 217–252; it reads KELQRELFDSMRKFSDNLDYESAMVYRDRLQALKSI.

Belongs to the UvrC family. As to quaternary structure, interacts with UvrB in an incision complex.

It is found in the cytoplasm. In terms of biological role, the UvrABC repair system catalyzes the recognition and processing of DNA lesions. UvrC both incises the 5' and 3' sides of the lesion. The N-terminal half is responsible for the 3' incision and the C-terminal half is responsible for the 5' incision. This is UvrABC system protein C from Anaplasma marginale (strain St. Maries).